A 940-amino-acid chain; its full sequence is Isoleucine--tRNA ligase (940 aa).

Residues proline 58–histidine 68 carry the 'HIGH' region motif. Glutamate 564 provides a ligand contact to L-isoleucyl-5'-AMP. The 'KMSKS' region signature appears at lysine 605–serine 609. ATP is bound at residue lysine 608. Residues cysteine 903, cysteine 906, cysteine 923, and cysteine 926 each coordinate Zn(2+).

The protein belongs to the class-I aminoacyl-tRNA synthetase family. IleS type 1 subfamily. As to quaternary structure, monomer. Zn(2+) is required as a cofactor.

It localises to the cytoplasm. The enzyme catalyses tRNA(Ile) + L-isoleucine + ATP = L-isoleucyl-tRNA(Ile) + AMP + diphosphate. Functionally, catalyzes the attachment of isoleucine to tRNA(Ile). As IleRS can inadvertently accommodate and process structurally similar amino acids such as valine, to avoid such errors it has two additional distinct tRNA(Ile)-dependent editing activities. One activity is designated as 'pretransfer' editing and involves the hydrolysis of activated Val-AMP. The other activity is designated 'posttransfer' editing and involves deacylation of mischarged Val-tRNA(Ile). The sequence is that of Isoleucine--tRNA ligase from Nitrosococcus oceani (strain ATCC 19707 / BCRC 17464 / JCM 30415 / NCIMB 11848 / C-107).